The sequence spans 174 residues: MESSSSLLHHSYLSYLNPKFGKRPLVSYPLMQSSRKCKQTRICSNKMYVPGFGEASPEAKAAKHLHDFFTYVAVRIVSAQLESYNPEAYMELREFLDTNSVSDGDKFCATLMRRSSRHMNLALRILEVRSAYCKNDFEWDNMKRLAFKNVDDSNTRLMREYVLETSHVETDSDK.

Residues 1–45 (MESSSSLLHHSYLSYLNPKFGKRPLVSYPLMQSSRKCKQTRICSN) constitute a chloroplast transit peptide.

This sequence belongs to the RbcX family. Homodimer. Interacts with rbcL, atpB and THI1.

It localises to the plastid. The protein localises to the chloroplast. Functionally, chaperone involved in RuBisCO assembly process. The polypeptide is Chaperonin-like RBCX protein 1, chloroplastic (Arabidopsis thaliana (Mouse-ear cress)).